A 308-amino-acid chain; its full sequence is HPr kinase/phosphorylase (308 aa).

Residues H141 and K162 contribute to the active site. 156–163 contacts ATP; that stretch reads GKSGVGKS. Position 163 (S163) interacts with Mg(2+). The active-site Proton acceptor; for phosphorylation activity. Proton donor; for dephosphorylation activity is D180. The important for the catalytic mechanism of both phosphorylation and dephosphorylation stretch occupies residues 204 to 213; sequence MEIRGVGILD. A Mg(2+)-binding site is contributed by E205. Residue R246 is part of the active site. Positions 267–272 are important for the catalytic mechanism of dephosphorylation; it reads PVKPGR.

The protein belongs to the HPrK/P family. Homohexamer. Requires Mg(2+) as cofactor.

It carries out the reaction [HPr protein]-L-serine + ATP = [HPr protein]-O-phospho-L-serine + ADP + H(+). It catalyses the reaction [HPr protein]-O-phospho-L-serine + phosphate + H(+) = [HPr protein]-L-serine + diphosphate. Its function is as follows. Catalyzes the ATP- as well as the pyrophosphate-dependent phosphorylation of a specific serine residue in HPr, a phosphocarrier protein of the phosphoenolpyruvate-dependent sugar phosphotransferase system (PTS). HprK/P also catalyzes the pyrophosphate-producing, inorganic phosphate-dependent dephosphorylation (phosphorolysis) of seryl-phosphorylated HPr (P-Ser-HPr). The two antagonistic activities of HprK/P are regulated by several intracellular metabolites, which change their concentration in response to the absence or presence of rapidly metabolisable carbon sources (glucose, fructose, etc.) in the growth medium. Therefore, by controlling the phosphorylation state of HPr, HPrK/P is a sensor enzyme that plays a major role in the regulation of carbon metabolism and sugar transport: it mediates carbon catabolite repression (CCR), and regulates PTS-catalyzed carbohydrate uptake and inducer exclusion. This chain is HPr kinase/phosphorylase, found in Peptoclostridium acidaminophilum (Eubacterium acidaminophilum).